Here is a 393-residue protein sequence, read N- to C-terminus: SET domain-containing protein DDB_G0283443 (393 aa).

In terms of domain architecture, SET spans 17 to 312 (KKIEINETLE…KGDELSISYI (296 aa)).

This sequence belongs to the class V-like SAM-binding methyltransferase superfamily.

In terms of biological role, probable methyltransferase. The protein is SET domain-containing protein DDB_G0283443 of Dictyostelium discoideum (Social amoeba).